A 263-amino-acid polypeptide reads, in one-letter code: tRNA (guanine-N(7)-)-methyltransferase (263 aa).

Positions methionine 1–arginine 33 are disordered. Glutamate 89, glutamate 114, aspartate 146, and aspartate 169 together coordinate S-adenosyl-L-methionine. Residue aspartate 169 is part of the active site. Residues lysine 173, aspartate 205, and threonine 242–glutamate 245 each bind substrate.

The protein belongs to the class I-like SAM-binding methyltransferase superfamily. TrmB family.

The catalysed reaction is guanosine(46) in tRNA + S-adenosyl-L-methionine = N(7)-methylguanosine(46) in tRNA + S-adenosyl-L-homocysteine. It participates in tRNA modification; N(7)-methylguanine-tRNA biosynthesis. Functionally, catalyzes the formation of N(7)-methylguanine at position 46 (m7G46) in tRNA. The sequence is that of tRNA (guanine-N(7)-)-methyltransferase from Mycolicibacterium gilvum (strain PYR-GCK) (Mycobacterium gilvum (strain PYR-GCK)).